We begin with the raw amino-acid sequence, 617 residues long: Prothrombin (617 aa).

The N-terminal stretch at 1–24 is a signal peptide; it reads MLHVRGLGLPGCLALAALASLVHS. The propeptide occupies 25 to 43; sequence QHVFLAPQQALSLLQRVRR. Positions 44-90 constitute a Gla domain; sequence ANSGFLEELRKGNLERECVEEQCSYEEAFEALESPQDTDVFWAKYTV. Glutamate 50, glutamate 51, glutamate 58, glutamate 60, glutamate 63, glutamate 64, glutamate 69, glutamate 70, glutamate 73, and glutamate 76 each carry 4-carboxyglutamate. An intrachain disulfide couples cysteine 61 to cysteine 66. 10 cysteine pairs are disulfide-bonded: cysteine 91/cysteine 104, cysteine 109/cysteine 187, cysteine 130/cysteine 170, cysteine 158/cysteine 182, cysteine 215/cysteine 292, cysteine 236/cysteine 276, cysteine 264/cysteine 287, cysteine 332/cysteine 478, cysteine 387/cysteine 403, and cysteine 532/cysteine 546. 2 Kringle domains span residues 109 to 187 and 215 to 292; these read CAMD…IPVC and CLLE…LNYC. Residues asparagine 120 and asparagine 144 are each glycosylated (N-linked (GlcNAc...) asparagine). Residues 360 to 614 enclose the Peptidase S1 domain; that stretch reads IVEGWDAEKG…LKRWMQKVID (255 aa). The active-site Charge relay system is the histidine 402. N-linked (GlcNAc...) asparagine glycosylation is present at asparagine 412. The active-site Charge relay system is aspartate 458. Positions 547-569 are high affinity receptor-binding region which is also known as the TP508 peptide; that stretch reads AGFKVNDTKRGDACEGDSGGPFV. An N-linked (GlcNAc...) asparagine glycan is attached at asparagine 552. Cysteine 560 and cysteine 590 are disulfide-bonded. Catalysis depends on serine 564, which acts as the Charge relay system.

It belongs to the peptidase S1 family. Heterodimer (named alpha-thrombin) of a light and a heavy chain; disulfide-linked. Forms a heterodimer with SERPINA5. In plasma, interacts (via N-terminus) with alpha-1-microglobulin; this interaction does not prevent the activation of prothrombin to thrombin. In terms of processing, the gamma-carboxyglutamyl residues, which bind calcium ions, result from the carboxylation of glutamyl residues by a microsomal enzyme, the vitamin K-dependent carboxylase. The modified residues are necessary for the calcium-dependent interaction with a negatively charged phospholipid surface, which is essential for the conversion of prothrombin to thrombin. In the penultimate step of the coagulation cascade, prothrombin is converted to thrombin by the prothrombinase complex composed of factor Xa (F10), cofactor Va (F5), and phospholipids. This activation requires factor Xa-catalyzed sequential cleavage at 2 sites, Arg-310 and Arg-359, along 2 possible pathways. In the first pathway, the first cleavage occurs at Arg-310, leading to the formation of the inactive intermediate prethrombin-2. This pathway preferentially occurs on platelets and in the absence of cofactor Va. In the second pathway, the first cleavage occurs at Arg-359, which separates protease domain into 2 chains that remain connected through a disulfide bond and generates the active intermediate meizothrombin. The presence of cofactor Va directs activation along the meizothrombin pathway and greatly accelerates the rate of cleavage at Arg-359, but has a smaller effect on the cleavage of meizothrombin at Arg-310. Meizothrombin accumulates as an intermediate when prothrombinase is assembled on the membrane of red blood cells.

It catalyses the reaction Selective cleavage of Arg-|-Gly bonds in fibrinogen to form fibrin and release fibrinopeptides A and B.. Its activity is regulated as follows. Activity is promoted in the presence of negatively charged surfaces, such as polyphosphate and dextran sulfate. Inhibited by SERPINA5. Functionally, thrombin, which cleaves bonds after Arg and Lys, converts fibrinogen to fibrin and activates factors V, VII, VIII, XIII, and, in complex with thrombomodulin, protein C. Functions in blood homeostasis, inflammation and wound healing. Activates coagulation factor XI (F11); activation is promoted by the contact with negatively charged surfaces. Triggers the production of pro-inflammatory cytokines, such as MCP-1/CCL2 and IL8/CXCL8, in endothelial cells. In Rattus norvegicus (Rat), this protein is Prothrombin (F2).